The primary structure comprises 114 residues: Hydrogenase maturation factor HypA (114 aa).

Residue H2 participates in Ni(2+) binding. Residues C70, C73, C86, and C89 each coordinate Zn(2+).

It belongs to the HypA/HybF family.

Functionally, involved in the maturation of [NiFe] hydrogenases. Required for nickel insertion into the metal center of the hydrogenase. This is Hydrogenase maturation factor HypA from Crocosphaera subtropica (strain ATCC 51142 / BH68) (Cyanothece sp. (strain ATCC 51142)).